A 446-amino-acid polypeptide reads, in one-letter code: Phosphoglucosamine mutase (446 aa).

The active-site Phosphoserine intermediate is Ser100. Ser100, Asp241, Asp243, and Asp245 together coordinate Mg(2+). Residue Ser100 is modified to Phosphoserine.

This sequence belongs to the phosphohexose mutase family. Mg(2+) serves as cofactor. Activated by phosphorylation.

The catalysed reaction is alpha-D-glucosamine 1-phosphate = D-glucosamine 6-phosphate. Its function is as follows. Catalyzes the conversion of glucosamine-6-phosphate to glucosamine-1-phosphate. The sequence is that of Phosphoglucosamine mutase from Methylorubrum populi (strain ATCC BAA-705 / NCIMB 13946 / BJ001) (Methylobacterium populi).